The sequence spans 508 residues: Arabinose import ATP-binding protein AraG (508 aa).

ABC transporter domains follow at residues 5-240 (LEFQ…MVGR) and 250-496 (ARTL…LPDA). An ATP-binding site is contributed by 37 to 44 (GENGAGKS).

The protein belongs to the ABC transporter superfamily. Arabinose importer (TC 3.A.1.2.2) family. In terms of assembly, the complex is composed of two ATP-binding proteins (AraG), two transmembrane proteins (AraH) and a solute-binding protein (AraF).

The protein resides in the cell inner membrane. The catalysed reaction is L-arabinose(out) + ATP + H2O = L-arabinose(in) + ADP + phosphate + H(+). Part of the ABC transporter complex AraFGH involved in arabinose import. Responsible for energy coupling to the transport system. In Rhizobium meliloti (strain 1021) (Ensifer meliloti), this protein is Arabinose import ATP-binding protein AraG.